The chain runs to 180 residues: Oligoribonuclease (180 aa).

Positions 7–168 (LVWIDLEMTG…QDIRDSIDEL (162 aa)) constitute an Exonuclease domain. The active site involves tyrosine 128.

This sequence belongs to the oligoribonuclease family.

It localises to the cytoplasm. Functionally, 3'-to-5' exoribonuclease specific for small oligoribonucleotides. This is Oligoribonuclease from Dichelobacter nodosus (strain VCS1703A).